Here is a 106-residue protein sequence, read N- to C-terminus: Integration host factor subunit alpha (106 aa).

This sequence belongs to the bacterial histone-like protein family. In terms of assembly, heterodimer of an alpha and a beta chain.

In terms of biological role, this protein is one of the two subunits of integration host factor, a specific DNA-binding protein that functions in genetic recombination as well as in transcriptional and translational control. This chain is Integration host factor subunit alpha, found in Nitrobacter winogradskyi (strain ATCC 25391 / DSM 10237 / CIP 104748 / NCIMB 11846 / Nb-255).